The following is a 1309-amino-acid chain: Disease resistance protein RPP2A (1309 aa).

A TIR 1 domain is found at 9 to 173 (RRYDVFPSFS…MVADDVSKKL (165 aa)). Glu84 is a catalytic residue. Residues 187–418 (EAHLEAMSSI…FKKTLRNYLP (232 aa)) enclose the NB-ARC 1 domain. An ALOG domain is found at 488 to 585 (PNRRHSNDDW…KECILVFSCH (98 aa)). Residues 574-737 (REKECILVFS…EVVRNASLRL (164 aa)) enclose the TIR 2 domain. Residues 755-987 (SQSTDVEIMG…IFLDLACFFR (233 aa)) form the NB-ARC 2 domain. Positions 1114–1141 (LPHGLDTLPDELSLLHWENYPLVYLPQK) form a coiled coil. LRR repeat units follow at residues 1145–1167 (VNLV…KKNL), 1168–1195 (EKLK…NLEH), 1214–1237 (CGKL…MVDL), 1238–1258 (TTLK…QDFA), 1259–1283 (PNLE…NLTE), and 1285–1307 (VTLD…EIIR).

The protein belongs to the disease resistance TIR-NB-LRR family.

It catalyses the reaction NAD(+) + H2O = ADP-D-ribose + nicotinamide + H(+). Its function is as follows. Disease resistance protein that cooperates with RPP2B to confer resistance to Hyaloperonospora parasitica isolate Cala2. This Arabidopsis thaliana (Mouse-ear cress) protein is Disease resistance protein RPP2A.